Reading from the N-terminus, the 346-residue chain is E3 ubiquitin-protein ligase MARCHF9 (346 aa).

Disordered stretches follow at residues 20–39 (GGGR…GGCG) and 47–92 (STRD…PGAL). The span at 63–75 (PRARGLAGDKEPR) shows a compositional bias: basic and acidic residues. The span at 77–90 (GPLPPPAPPLPPPG) shows a compositional bias: pro residues. The RING-CH-type zinc-finger motif lies at 102-162 (DSGLRTPQCR…ELCYFKYQVL (61 aa)). 8 residues coordinate Zn(2+): Cys110, Cys113, Cys126, Cys128, His136, Cys139, Cys152, and Cys155. The next 2 helical transmembrane spans lie at 185–205 (IAAI…LIWS) and 219–239 (LFQI…GLII). Disordered stretches follow at residues 273 to 301 (DAGG…RPPA) and 326 to 346 (PPDA…VTTV). Residues 284-296 (PRNSRTGPTSGAT) show a composition bias toward polar residues.

As to quaternary structure, homodimer. In terms of tissue distribution, ubiquitously expressed.

It is found in the golgi apparatus membrane. Its subcellular location is the lysosome membrane. The catalysed reaction is S-ubiquitinyl-[E2 ubiquitin-conjugating enzyme]-L-cysteine + [acceptor protein]-L-lysine = [E2 ubiquitin-conjugating enzyme]-L-cysteine + N(6)-ubiquitinyl-[acceptor protein]-L-lysine.. It functions in the pathway protein modification; protein ubiquitination. E3 ubiquitin-protein ligase that may mediate ubiquitination of MHC-I, CD4 and ICAM1, and promote their subsequent endocytosis and sorting to lysosomes via multivesicular bodies. E3 ubiquitin ligases accept ubiquitin from an E2 ubiquitin-conjugating enzyme in the form of a thioester and then directly transfer the ubiquitin to targeted substrates. This Homo sapiens (Human) protein is E3 ubiquitin-protein ligase MARCHF9.